We begin with the raw amino-acid sequence, 335 residues long: Taste receptor type 2 member 119 (335 aa).

Residues 1–7 (MMEGHIL) lie on the Extracellular side of the membrane. A helical transmembrane segment spans residues 8–28 (FFFLVVMVQFVTGVLANGLIV). Topologically, residues 29-43 (VVHAIDLIMWKKMAP) are cytoplasmic. Residues 44-64 (LDLLLFCLATSRIILQLCILF) form a helical membrane-spanning segment. At 65 to 81 (AQLCLFSLVRHTLFEDN) the chain is on the extracellular side. The N-linked (GlcNAc...) asparagine glycan is linked to asparagine 81. A helical membrane pass occupies residues 82-102 (ITFVFIINELSLWFATWLGVF). The Cytoplasmic segment spans residues 103 to 124 (YCAKIATIPHPLFLWLKMRISR). The helical transmembrane segment at 125 to 145 (LVPWLILGSVLYVIITTFIHS) threads the bilayer. The Extracellular portion of the chain corresponds to 146 to 176 (RETSAILKPIFISLFPKNATQVGTGHATLLS). Asparagine 163 carries an N-linked (GlcNAc...) asparagine glycan. A helical transmembrane segment spans residues 177–197 (VLVLGLTLPLFIFTVAVLLLI). At 198-224 (YSLWNYSRQMRTMVGTREYSGHAHISA) the chain is on the cytoplasmic side. The chain crosses the membrane as a helical span at residues 225–245 (MLSILSFLILYLSHYMVAVLI). The Extracellular portion of the chain corresponds to 246–256 (STQVLYLGSRT). The chain crosses the membrane as a helical span at residues 257-277 (FVFCLLVIGMYPSIHSIVLIL). The Cytoplasmic segment spans residues 278 to 335 (GNPKLKRNAKMFIVHCKCCHCTRAWVTSRSPRLSDLPVPPTHPSANKTSCSEACIMPS). The segment at 308-327 (PRLSDLPVPPTHPSANKTSC) is disordered.

The protein belongs to the G-protein coupled receptor T2R family. As to expression, expressed in subsets of taste receptor cells of the tongue and palate epithelium and exclusively in gustducin-positive cells. Expressed in the duodenum, antrum and fundus (part of the stomach).

The protein localises to the membrane. Its function is as follows. Gustducin-coupled receptor implicated in the perception of bitter compounds in the oral cavity and the gastrointestinal tract. Signals through PLCB2 and the calcium-regulated cation channel TRPM5. The polypeptide is Taste receptor type 2 member 119 (Tas2r119) (Rattus norvegicus (Rat)).